We begin with the raw amino-acid sequence, 483 residues long: Regulatory protein ViaA (483 aa).

This sequence belongs to the ViaA family. As to quaternary structure, homodimer. Interacts with RavA.

It localises to the cytoplasm. Functionally, component of the RavA-ViaA chaperone complex, which may act on the membrane to optimize the function of some of the respiratory chains. ViaA stimulates the ATPase activity of RavA. This is Regulatory protein ViaA from Enterobacter sp. (strain 638).